The primary structure comprises 348 residues: Signal recognition particle receptor FtsY (348 aa).

GTP-binding positions include 143 to 150 (GVNGVGKT), 225 to 229 (DTSGR), and 289 to 292 (TKMD).

Belongs to the GTP-binding SRP family. FtsY subfamily. In terms of assembly, part of the signal recognition particle protein translocation system, which is composed of SRP and FtsY.

It localises to the cell membrane. It is found in the cytoplasm. It carries out the reaction GTP + H2O = GDP + phosphate + H(+). Involved in targeting and insertion of nascent membrane proteins into the cytoplasmic membrane. Acts as a receptor for the complex formed by the signal recognition particle (SRP) and the ribosome-nascent chain (RNC). The polypeptide is Signal recognition particle receptor FtsY (Mycoplasma pneumoniae (strain ATCC 29342 / M129 / Subtype 1) (Mycoplasmoides pneumoniae)).